The following is an 866-amino-acid chain: Probable LRR receptor-like serine/threonine-protein kinase At5g16900 (866 aa).

A signal peptide spans 1–20 (MEDRHRYLFFIFAIIHYVQA). At 21 to 515 (QQGFISLDCG…SSSGNKETTV (495 aa)) the chain is on the extracellular side. N-linked (GlcNAc...) asparagine glycans are attached at residues asparagine 137, asparagine 176, asparagine 230, asparagine 251, asparagine 331, asparagine 404, asparagine 409, and asparagine 436. 3 LRR repeats span residues 415 to 438 (RIIS…QNLT), 439 to 461 (QLQK…LANM), and 463 to 485 (SLLF…LLDR). Residues asparagine 468 and asparagine 505 are each glycosylated (N-linked (GlcNAc...) asparagine). The helical transmembrane segment at 516–536 (IAPVAAAIAIFIAVLVLIIVF) threads the bilayer. Residues 537–866 (IKKRPSSIRA…LNQVIDSKSS (330 aa)) are Cytoplasmic-facing. At threonine 564 the chain carries Phosphothreonine. The region spanning 573-846 (NNFERVIGEG…HVVQELKQCI (274 aa)) is the Protein kinase domain. ATP is bound by residues 579-587 (IGEGGFGVV) and lysine 601. Tyrosine 646 carries the post-translational modification Phosphotyrosine. The active-site Proton acceptor is aspartate 698. A Phosphoserine modification is found at serine 732. Phosphothreonine is present on residues threonine 733 and threonine 738. The residue at position 746 (tyrosine 746) is a Phosphotyrosine.

The protein belongs to the protein kinase superfamily. Ser/Thr protein kinase family.

The protein resides in the membrane. It catalyses the reaction L-seryl-[protein] + ATP = O-phospho-L-seryl-[protein] + ADP + H(+). The catalysed reaction is L-threonyl-[protein] + ATP = O-phospho-L-threonyl-[protein] + ADP + H(+). The sequence is that of Probable LRR receptor-like serine/threonine-protein kinase At5g16900 from Arabidopsis thaliana (Mouse-ear cress).